Here is a 486-residue protein sequence, read N- to C-terminus: Deleted in azoospermia protein 3 (486 aa).

Over residues 1–10 the composition is skewed to polar residues; the sequence is MSAANPETPN. Positions 1–27 are disordered; it reads MSAANPETPNSTISREASTQSSSAAAS. The span at 11-27 shows a compositional bias: low complexity; that stretch reads STISREASTQSSSAAAS. Residues 40–115 enclose the RRM domain; that stretch reads NTVFVGGIDA…KKLKLGPAIR (76 aa). DAZ domains follow at residues 167–190, 191–214, 215–238, 239–262, 263–286, 287–310, 311–334, 335–358, 359–382, 383–406, 407–430, and 431–454; these read AYSAYPHSPGQVITGCQLLVYNYQ, EYPTYPDSAFQVTTGYQLPVYNYQ, PFPAYPRSPFQVTAGYQLPVYNYQ, AFPAYPNSPFQVATGYQFPVYNYQ, PFPAYPSSPFQVTAGYQLPVYNYQ, AFPAYPNSPVQVTTGYQLPVYNYQ, and AFPAYPNSAVQVTTGYQFHVYNYQ.

It belongs to the RRM DAZ family. In terms of assembly, forms a heterodimer with BOLL and DAZL. Interacts with PUM2, DAZAP1, DAZAP2, DZIP1 and DZIP3. As to expression, testis specific.

The protein resides in the cytoplasm. It is found in the nucleus. RNA-binding protein that plays an essential role in spermatogenesis. May act by binding to the 3'-UTR of mRNAs and regulating their translation. The protein is Deleted in azoospermia protein 3 (DAZ3) of Homo sapiens (Human).